Reading from the N-terminus, the 115-residue chain is Large ribosomal subunit protein uL22 (115 aa).

Belongs to the universal ribosomal protein uL22 family. In terms of assembly, part of the 50S ribosomal subunit.

Functionally, this protein binds specifically to 23S rRNA; its binding is stimulated by other ribosomal proteins, e.g. L4, L17, and L20. It is important during the early stages of 50S assembly. It makes multiple contacts with different domains of the 23S rRNA in the assembled 50S subunit and ribosome. The globular domain of the protein is located near the polypeptide exit tunnel on the outside of the subunit, while an extended beta-hairpin is found that lines the wall of the exit tunnel in the center of the 70S ribosome. This chain is Large ribosomal subunit protein uL22, found in Limosilactobacillus reuteri subsp. reuteri (strain JCM 1112) (Lactobacillus reuteri).